The sequence spans 1007 residues: Zinc finger CCCH domain-containing protein 4 (1007 aa).

One can recognise a Helicase ATP-binding domain in the interval 28-192; it reads VEKVKGNRVT…FRDLGRGERV (165 aa). 41 to 48 contributes to the ATP binding site; it reads GDTGCGKS. The short motif at 139–142 is the DEAH box element; sequence DEIH. The Helicase C-terminal domain maps to 250-420; the sequence is LIHRLLLHIH…EQVLMICCAE (171 aa). C3H1-type zinc fingers lie at residues 723–750 and 751–778; these read ALEN…HSSR and APRP…HDSG.

The protein is Zinc finger CCCH domain-containing protein 4 of Oryza sativa subsp. japonica (Rice).